Reading from the N-terminus, the 464-residue chain is ATP synthase subunit beta (464 aa).

ATP is bound at residue 153–160 (GGAGVGKT).

It belongs to the ATPase alpha/beta chains family. As to quaternary structure, F-type ATPases have 2 components, CF(1) - the catalytic core - and CF(0) - the membrane proton channel. CF(1) has five subunits: alpha(3), beta(3), gamma(1), delta(1), epsilon(1). CF(0) has three main subunits: a(1), b(2) and c(9-12). The alpha and beta chains form an alternating ring which encloses part of the gamma chain. CF(1) is attached to CF(0) by a central stalk formed by the gamma and epsilon chains, while a peripheral stalk is formed by the delta and b chains.

Its subcellular location is the cell inner membrane. The catalysed reaction is ATP + H2O + 4 H(+)(in) = ADP + phosphate + 5 H(+)(out). Produces ATP from ADP in the presence of a proton gradient across the membrane. The catalytic sites are hosted primarily by the beta subunits. In Burkholderia cenocepacia (strain ATCC BAA-245 / DSM 16553 / LMG 16656 / NCTC 13227 / J2315 / CF5610) (Burkholderia cepacia (strain J2315)), this protein is ATP synthase subunit beta.